A 319-amino-acid chain; its full sequence is ATP-dependent 6-phosphofructokinase (319 aa).

Residue Gly-11 participates in ATP binding. Position 21-25 (21-25) interacts with ADP; sequence RAVVR. ATP-binding positions include 72-73 and 102-105; these read RC and GDGS. Asp-103 is a Mg(2+) binding site. Position 125 to 127 (125 to 127) interacts with substrate; sequence TID. Asp-127 functions as the Proton acceptor in the catalytic mechanism. Arg-154 contributes to the ADP binding site. Substrate-binding positions include Arg-162 and 169–171; that span reads MGR. Residues 185-187, Arg-211, and 213-215 each bind ADP; these read GAE and KKH. Residues Glu-222, Arg-243, and 249 to 252 each bind substrate; that span reads HVQR.

It belongs to the phosphofructokinase type A (PFKA) family. ATP-dependent PFK group I subfamily. Prokaryotic clade 'B1' sub-subfamily. Homotetramer. The cofactor is Mg(2+).

It is found in the cytoplasm. The enzyme catalyses beta-D-fructose 6-phosphate + ATP = beta-D-fructose 1,6-bisphosphate + ADP + H(+). The protein operates within carbohydrate degradation; glycolysis; D-glyceraldehyde 3-phosphate and glycerone phosphate from D-glucose: step 3/4. With respect to regulation, allosterically activated by ADP and other diphosphonucleosides, and allosterically inhibited by phosphoenolpyruvate. In terms of biological role, catalyzes the phosphorylation of D-fructose 6-phosphate to fructose 1,6-bisphosphate by ATP, the first committing step of glycolysis. This chain is ATP-dependent 6-phosphofructokinase, found in Bacillus mycoides (strain KBAB4) (Bacillus weihenstephanensis).